Consider the following 354-residue polypeptide: UPF0283 membrane protein plu2581 (354 aa).

3 helical membrane-spanning segments follow: residues 71-91 (MVYG…VQWI), 101-121 (SALG…GSLV), and 214-234 (ESAL…FIAW).

Belongs to the UPF0283 family.

Its subcellular location is the cell inner membrane. This Photorhabdus laumondii subsp. laumondii (strain DSM 15139 / CIP 105565 / TT01) (Photorhabdus luminescens subsp. laumondii) protein is UPF0283 membrane protein plu2581.